Reading from the N-terminus, the 244-residue chain is Protein HRI1 (244 aa).

A Phosphoserine modification is found at Ser-143.

This sequence belongs to the HRI1 family. As to quaternary structure, interacts with HRR25. May interact with SEC72.

Its subcellular location is the cytoplasm. It is found in the nucleus. Functionally, unknown. Non essential. The polypeptide is Protein HRI1 (HRI1) (Saccharomyces cerevisiae (strain ATCC 204508 / S288c) (Baker's yeast)).